Reading from the N-terminus, the 327-residue chain is Probable cell division protein WhiA (327 aa).

The segment at residues 275-308 (SLEELGRLADPPMTKDAVAGRIRRLLSMADRKAK) is a DNA-binding region (H-T-H motif).

It belongs to the WhiA family.

In terms of biological role, involved in cell division and chromosome segregation. The chain is Probable cell division protein WhiA from Mycobacterium leprae (strain Br4923).